We begin with the raw amino-acid sequence, 257 residues long: Imidazole glycerol phosphate synthase subunit HisF (257 aa).

Residues Asp12 and Asp131 contribute to the active site.

The protein belongs to the HisA/HisF family. As to quaternary structure, heterodimer of HisH and HisF.

The protein localises to the cytoplasm. The enzyme catalyses 5-[(5-phospho-1-deoxy-D-ribulos-1-ylimino)methylamino]-1-(5-phospho-beta-D-ribosyl)imidazole-4-carboxamide + L-glutamine = D-erythro-1-(imidazol-4-yl)glycerol 3-phosphate + 5-amino-1-(5-phospho-beta-D-ribosyl)imidazole-4-carboxamide + L-glutamate + H(+). It participates in amino-acid biosynthesis; L-histidine biosynthesis; L-histidine from 5-phospho-alpha-D-ribose 1-diphosphate: step 5/9. Its function is as follows. IGPS catalyzes the conversion of PRFAR and glutamine to IGP, AICAR and glutamate. The HisF subunit catalyzes the cyclization activity that produces IGP and AICAR from PRFAR using the ammonia provided by the HisH subunit. In Burkholderia pseudomallei (strain 1106a), this protein is Imidazole glycerol phosphate synthase subunit HisF.